Here is a 191-residue protein sequence, read N- to C-terminus: MSAIWIAIAVLSALSLVFGGLLGYASRRFAVEEDPIVEQIDAILPQSQCGQCGYPGCRPYADAVGNNGEMINKCAPGGEQTMLKLAALLNVEPQPLGAEEAREPERKVAWIDEANCIGCTKCIQACPVDAIVGATRAMHTVLSDICTGCDLCVAPCPTDCIEMRPVATTTANWKWDLHTIPVRVITVESHA.

The tract at residues 1 to 26 is hydrophobic; sequence MSAIWIAIAVLSALSLVFGGLLGYAS. The region spanning 32–91 is the 4Fe-4S domain; it reads EEDPIVEQIDAILPQSQCGQCGYPGCRPYADAVGNNGEMINKCAPGGEQTMLKLAALLNV. 12 residues coordinate [4Fe-4S] cluster: cysteine 49, cysteine 52, cysteine 57, cysteine 74, cysteine 116, cysteine 119, cysteine 122, cysteine 126, cysteine 146, cysteine 149, cysteine 152, and cysteine 156. 2 4Fe-4S ferredoxin-type domains span residues 107-136 and 137-166; these read KVAWIDEANCIGCTKCIQACPVDAIVGATR and AMHTVLSDICTGCDLCVAPCPTDCIEMRPV.

Belongs to the 4Fe4S bacterial-type ferredoxin family. RnfB subfamily. The complex is composed of six subunits: RnfA, RnfB, RnfC, RnfD, RnfE and RnfG. Requires [4Fe-4S] cluster as cofactor.

It localises to the cell inner membrane. Its function is as follows. Part of a membrane-bound complex that couples electron transfer with translocation of ions across the membrane. The polypeptide is Ion-translocating oxidoreductase complex subunit B (Erwinia tasmaniensis (strain DSM 17950 / CFBP 7177 / CIP 109463 / NCPPB 4357 / Et1/99)).